Reading from the N-terminus, the 500-residue chain is MAKAELMDYDEAIEMFEPVLGFEVHVELNTRTKMFSDAPNFFGGEPNTNITPVDLGLPGSLPVVNEQAVKHSISLGLALGCEIAPSSRFARKNYFYPDLAKNYQISQFDEPIAFRGSVEVEMPDGRIVTVPIERAHMEEDAGKLTHVGGATGRIQGADHSLVDYNRAGVPLVEIVTDIIYGAEGEAPELAKAYVSTIRDIVVALGISDAKMERGNLRCDANISLSPRGSGKLGTRTETKNVNSLRSVERAIRYEIQRQAAILAAGGTITQETRHWHEDTGRTSAGRPKSDADDYRYFPEPDLLPVQPSAELIEELRAALPEAPAIRRRRLKAEWGFTDLEFQDVVNSGLLTELVDTVEAGAAPQAARKWWTGEIARIANARGVDAATLISPTQVASVIELVEAGTLTNRLARDVIEGVIDGEGTAQEVVDARGLAVVSDDGPLIEAIDAALQAQPDVLAKIRDGKVQAAGAVIGAVMKAMRGQADAARVRELVLERAQAS.

It belongs to the GatB/GatE family. GatB subfamily. In terms of assembly, heterotrimer of A, B and C subunits.

The enzyme catalyses L-glutamyl-tRNA(Gln) + L-glutamine + ATP + H2O = L-glutaminyl-tRNA(Gln) + L-glutamate + ADP + phosphate + H(+). It carries out the reaction L-aspartyl-tRNA(Asn) + L-glutamine + ATP + H2O = L-asparaginyl-tRNA(Asn) + L-glutamate + ADP + phosphate + 2 H(+). In terms of biological role, allows the formation of correctly charged Asn-tRNA(Asn) or Gln-tRNA(Gln) through the transamidation of misacylated Asp-tRNA(Asn) or Glu-tRNA(Gln) in organisms which lack either or both of asparaginyl-tRNA or glutaminyl-tRNA synthetases. The reaction takes place in the presence of glutamine and ATP through an activated phospho-Asp-tRNA(Asn) or phospho-Glu-tRNA(Gln). The protein is Aspartyl/glutamyl-tRNA(Asn/Gln) amidotransferase subunit B of Clavibacter michiganensis subsp. michiganensis (strain NCPPB 382).